A 246-amino-acid chain; its full sequence is 1-(5-phosphoribosyl)-5-[(5-phosphoribosylamino)methylideneamino] imidazole-4-carboxamide isomerase (246 aa).

The Proton acceptor role is filled by Asp-10. The active-site Proton donor is Asp-135.

The protein belongs to the HisA/HisF family.

It localises to the cytoplasm. It carries out the reaction 1-(5-phospho-beta-D-ribosyl)-5-[(5-phospho-beta-D-ribosylamino)methylideneamino]imidazole-4-carboxamide = 5-[(5-phospho-1-deoxy-D-ribulos-1-ylimino)methylamino]-1-(5-phospho-beta-D-ribosyl)imidazole-4-carboxamide. Its pathway is amino-acid biosynthesis; L-histidine biosynthesis; L-histidine from 5-phospho-alpha-D-ribose 1-diphosphate: step 4/9. The protein is 1-(5-phosphoribosyl)-5-[(5-phosphoribosylamino)methylideneamino] imidazole-4-carboxamide isomerase of Methanosarcina mazei (strain ATCC BAA-159 / DSM 3647 / Goe1 / Go1 / JCM 11833 / OCM 88) (Methanosarcina frisia).